A 278-amino-acid polypeptide reads, in one-letter code: HTH-type transcriptional activator RhaS (278 aa).

One can recognise an HTH araC/xylS-type domain in the interval 174 to 272 (NQLMAWLEDH…NWSPRDIRQG (99 aa)). 2 DNA-binding regions (H-T-H motif) span residues 191–212 (EAVA…KQHT) and 239–262 (VTEI…RREF).

As to quaternary structure, binds DNA as a dimer.

It localises to the cytoplasm. Activates expression of the rhaBAD and rhaT operons. The protein is HTH-type transcriptional activator RhaS of Salmonella paratyphi A (strain ATCC 9150 / SARB42).